A 40-amino-acid polypeptide reads, in one-letter code: Photosystem II reaction center protein J (40 aa).

The chain crosses the membrane as a helical span at residues 8–28 (IPLWLVGTVAGILVIGLIGIF).

Belongs to the PsbJ family. In terms of assembly, PSII is composed of 1 copy each of membrane proteins PsbA, PsbB, PsbC, PsbD, PsbE, PsbF, PsbH, PsbI, PsbJ, PsbK, PsbL, PsbM, PsbT, PsbX, PsbY, PsbZ, Psb30/Ycf12, at least 3 peripheral proteins of the oxygen-evolving complex and a large number of cofactors. It forms dimeric complexes.

It localises to the plastid. The protein resides in the chloroplast thylakoid membrane. Its function is as follows. One of the components of the core complex of photosystem II (PSII). PSII is a light-driven water:plastoquinone oxidoreductase that uses light energy to abstract electrons from H(2)O, generating O(2) and a proton gradient subsequently used for ATP formation. It consists of a core antenna complex that captures photons, and an electron transfer chain that converts photonic excitation into a charge separation. The protein is Photosystem II reaction center protein J of Gnetum parvifolium (Small-leaved jointfir).